Consider the following 78-residue polypeptide: D-alanyl carrier protein (78 aa).

One can recognise a Carrier domain in the interval 1-78; it reads MAFRENVLEI…MIITQLEALK (78 aa). Serine 36 is modified (O-(pantetheine 4'-phosphoryl)serine).

The protein belongs to the DltC family. Post-translationally, 4'-phosphopantetheine is transferred from CoA to a specific serine of apo-DCP.

Its subcellular location is the cytoplasm. Its pathway is cell wall biogenesis; lipoteichoic acid biosynthesis. Carrier protein involved in the D-alanylation of lipoteichoic acid (LTA). The loading of thioester-linked D-alanine onto DltC is catalyzed by D-alanine--D-alanyl carrier protein ligase DltA. The DltC-carried D-alanyl group is further transferred to cell membrane phosphatidylglycerol (PG) by forming an ester bond, probably catalyzed by DltD. D-alanylation of LTA plays an important role in modulating the properties of the cell wall in Gram-positive bacteria, influencing the net charge of the cell wall. The polypeptide is D-alanyl carrier protein (Listeria monocytogenes serotype 4b (strain CLIP80459)).